The following is a 59-amino-acid chain: Large ribosomal subunit protein uL30 (59 aa).

It belongs to the universal ribosomal protein uL30 family. In terms of assembly, part of the 50S ribosomal subunit.

This Geotalea daltonii (strain DSM 22248 / JCM 15807 / FRC-32) (Geobacter daltonii) protein is Large ribosomal subunit protein uL30.